Here is a 284-residue protein sequence, read N- to C-terminus: Bifunctional protein FolD (284 aa).

Residues glycine 166–serine 168 and isoleucine 232 contribute to the NADP(+) site.

The protein belongs to the tetrahydrofolate dehydrogenase/cyclohydrolase family. As to quaternary structure, homodimer.

It carries out the reaction (6R)-5,10-methylene-5,6,7,8-tetrahydrofolate + NADP(+) = (6R)-5,10-methenyltetrahydrofolate + NADPH. The catalysed reaction is (6R)-5,10-methenyltetrahydrofolate + H2O = (6R)-10-formyltetrahydrofolate + H(+). Its pathway is one-carbon metabolism; tetrahydrofolate interconversion. Its function is as follows. Catalyzes the oxidation of 5,10-methylenetetrahydrofolate to 5,10-methenyltetrahydrofolate and then the hydrolysis of 5,10-methenyltetrahydrofolate to 10-formyltetrahydrofolate. The polypeptide is Bifunctional protein FolD (Tolumonas auensis (strain DSM 9187 / NBRC 110442 / TA 4)).